The sequence spans 503 residues: 2-isopropylmalate synthase (503 aa).

In terms of domain architecture, Pyruvate carboxyltransferase spans 4–264; the sequence is LYIFDTTLRD…EVSIKTEEIY (261 aa). Mn(2+) is bound by residues Asp13, His201, His203, and Asn237. A regulatory domain region spans residues 388 to 503; the sequence is KLRHLQVVSG…NQLVMLKGKD (116 aa).

Belongs to the alpha-IPM synthase/homocitrate synthase family. LeuA type 1 subfamily. Homodimer. Mn(2+) serves as cofactor.

The protein resides in the cytoplasm. The enzyme catalyses 3-methyl-2-oxobutanoate + acetyl-CoA + H2O = (2S)-2-isopropylmalate + CoA + H(+). It participates in amino-acid biosynthesis; L-leucine biosynthesis; L-leucine from 3-methyl-2-oxobutanoate: step 1/4. Its function is as follows. Catalyzes the condensation of the acetyl group of acetyl-CoA with 3-methyl-2-oxobutanoate (2-ketoisovalerate) to form 3-carboxy-3-hydroxy-4-methylpentanoate (2-isopropylmalate). This Dictyoglomus turgidum (strain DSM 6724 / Z-1310) protein is 2-isopropylmalate synthase.